A 300-amino-acid polypeptide reads, in one-letter code: D-alanine--D-alanine ligase (300 aa).

Positions 99–293 (KKILKYANIN…FAELLNSIVK (195 aa)) constitute an ATP-grasp domain. ATP is bound at residue 126–181 (IEKIGYPVFVKPNSGGSSVATNLVKDGDGIKEAVELALKYDKEVMIENYTKGEEIT). Residues aspartate 248, glutamate 260, and asparagine 262 each coordinate Mg(2+).

It belongs to the D-alanine--D-alanine ligase family. The cofactor is Mg(2+). Requires Mn(2+) as cofactor.

The protein localises to the cytoplasm. The enzyme catalyses 2 D-alanine + ATP = D-alanyl-D-alanine + ADP + phosphate + H(+). It participates in cell wall biogenesis; peptidoglycan biosynthesis. Cell wall formation. This is D-alanine--D-alanine ligase from Clostridium botulinum (strain 657 / Type Ba4).